The sequence spans 382 residues: Dual-specificity RNA methyltransferase RlmN (382 aa).

The active-site Proton acceptor is the E95. The region spanning 101-348 (EDDRGTLCIS…TTVRKTRGDD (248 aa)) is the Radical SAM core domain. C108 and C353 form a disulfide bridge. [4Fe-4S] cluster is bound by residues C115, C119, and C122. S-adenosyl-L-methionine is bound by residues 179–180 (GE), S211, 233–235 (SLH), and N310. The active-site S-methylcysteine intermediate is C353.

It belongs to the radical SAM superfamily. RlmN family. Requires [4Fe-4S] cluster as cofactor.

The protein resides in the cytoplasm. The enzyme catalyses adenosine(2503) in 23S rRNA + 2 reduced [2Fe-2S]-[ferredoxin] + 2 S-adenosyl-L-methionine = 2-methyladenosine(2503) in 23S rRNA + 5'-deoxyadenosine + L-methionine + 2 oxidized [2Fe-2S]-[ferredoxin] + S-adenosyl-L-homocysteine. It catalyses the reaction adenosine(37) in tRNA + 2 reduced [2Fe-2S]-[ferredoxin] + 2 S-adenosyl-L-methionine = 2-methyladenosine(37) in tRNA + 5'-deoxyadenosine + L-methionine + 2 oxidized [2Fe-2S]-[ferredoxin] + S-adenosyl-L-homocysteine. Functionally, specifically methylates position 2 of adenine 2503 in 23S rRNA and position 2 of adenine 37 in tRNAs. m2A2503 modification seems to play a crucial role in the proofreading step occurring at the peptidyl transferase center and thus would serve to optimize ribosomal fidelity. The protein is Dual-specificity RNA methyltransferase RlmN of Bordetella parapertussis (strain 12822 / ATCC BAA-587 / NCTC 13253).